The primary structure comprises 339 residues: Phosphate acyltransferase (339 aa).

This sequence belongs to the PlsX family. As to quaternary structure, homodimer. Probably interacts with PlsY.

The protein resides in the cytoplasm. The catalysed reaction is a fatty acyl-[ACP] + phosphate = an acyl phosphate + holo-[ACP]. Its pathway is lipid metabolism; phospholipid metabolism. Its function is as follows. Catalyzes the reversible formation of acyl-phosphate (acyl-PO(4)) from acyl-[acyl-carrier-protein] (acyl-ACP). This enzyme utilizes acyl-ACP as fatty acyl donor, but not acyl-CoA. This is Phosphate acyltransferase from Dechloromonas aromatica (strain RCB).